We begin with the raw amino-acid sequence, 91 residues long: Defensin-like protein 95 (91 aa).

The signal sequence occupies residues 1-27 (MGSLKLSTFAIVVCLSILLISPIEVNG). 4 cysteine pairs are disulfide-bonded: Cys31–Cys76, Cys38–Cys63, Cys47–Cys73, and Cys51–Cys75.

This sequence belongs to the DEFL family.

It is found in the secreted. This is Defensin-like protein 95 from Arabidopsis thaliana (Mouse-ear cress).